Consider the following 191-residue polypeptide: Probable GTP-binding protein EngB (191 aa).

Positions 22–190 (RLPEIAFLGR…WQAITTTLQA (169 aa)) constitute an EngB-type G domain. Residues 30–37 (GRSNVGKS), 57–61 (GRTQT), 75–78 (DLPG), 142–145 (TKTD), and 169–171 (FSA) contribute to the GTP site. Residues Ser37 and Thr59 each coordinate Mg(2+).

This sequence belongs to the TRAFAC class TrmE-Era-EngA-EngB-Septin-like GTPase superfamily. EngB GTPase family. Mg(2+) serves as cofactor.

In terms of biological role, necessary for normal cell division and for the maintenance of normal septation. The sequence is that of Probable GTP-binding protein EngB from Solibacter usitatus (strain Ellin6076).